A 241-amino-acid polypeptide reads, in one-letter code: Endothelial protein C receptor (241 aa).

An N-terminal signal peptide occupies residues 1-20 (MLTKFLSLLLLLLLLGCAFC). Topologically, residues 21-213 (NSDGSQSLHM…GSQTGRSYTS (193 aa)) are extracellular. Asn47, Asn64, Asn139, Asn165, and Asn175 each carry an N-linked (GlcNAc...) asparagine glycan. The helical transmembrane segment at 214-234 (LVLGILMGCFIIAGVAVGIFL) threads the bilayer. At 235–241 (CTGGRRC) the chain is on the cytoplasmic side.

The protein localises to the membrane. Its function is as follows. Binds activated protein C. Enhances protein C activation by the thrombin-thrombomodulin complex; plays a role in the protein C pathway controlling blood coagulation. The protein is Endothelial protein C receptor (Procr) of Rattus norvegicus (Rat).